Here is a 262-residue protein sequence, read N- to C-terminus: Diphthine synthase (262 aa).

S-adenosyl-L-methionine contacts are provided by residues leucine 10, aspartate 87, valine 90, 115–116 (SI), leucine 166, alanine 209, and histidine 234.

The protein belongs to the diphthine synthase family. As to quaternary structure, homodimer.

The enzyme catalyses 2-[(3S)-amino-3-carboxypropyl]-L-histidyl-[translation elongation factor 2] + 3 S-adenosyl-L-methionine = diphthine-[translation elongation factor 2] + 3 S-adenosyl-L-homocysteine + 3 H(+). It functions in the pathway protein modification; peptidyl-diphthamide biosynthesis. Functionally, S-adenosyl-L-methionine-dependent methyltransferase that catalyzes the trimethylation of the amino group of the modified target histidine residue in translation elongation factor 2 (EF-2), to form an intermediate called diphthine. The three successive methylation reactions represent the second step of diphthamide biosynthesis. This chain is Diphthine synthase, found in Pyrococcus abyssi (strain GE5 / Orsay).